Here is a 128-residue protein sequence, read N- to C-terminus: Glycine cleavage system H protein (128 aa).

Residues 22-104 enclose the Lipoyl-binding domain; the sequence is TVLVGITDYA…YGEGWIFRLK (83 aa). An N6-lipoyllysine modification is found at K63.

This sequence belongs to the GcvH family. The glycine cleavage system is composed of four proteins: P, T, L and H. Monomer. Requires (R)-lipoate as cofactor.

The glycine cleavage system catalyzes the degradation of glycine. The H protein shuttles the methylamine group of glycine from the P protein to the T protein. This chain is Glycine cleavage system H protein, found in Thermus thermophilus (strain ATCC 27634 / DSM 579 / HB8).